The primary structure comprises 128 residues: V-type proton ATPase subunit F (128 aa).

The protein belongs to the V-ATPase F subunit family. In terms of assembly, V-ATPase is a heteromultimeric enzyme composed of a peripheral catalytic V1 complex (components A to H) attached to an integral membrane V0 proton pore complex (components: a, c, c'', d and e).

The protein localises to the vacuole membrane. Subunit of the peripheral V1 complex of vacuolar ATPase essential for assembly or catalytic function. V-ATPase is responsible for acidifying a variety of intracellular compartments in eukaryotic cells. The polypeptide is V-type proton ATPase subunit F (VHA-F) (Arabidopsis thaliana (Mouse-ear cress)).